The sequence spans 68 residues: Venom peptide 3 (68 aa).

Residues methionine 1–alanine 25 form the signal peptide. AXPX repeat units follow at residues alanine 25–alanine 28, alanine 33–isoleucine 36, alanine 37–tyrosine 40, alanine 41–glutamate 44, and alanine 47–glutamate 50. The propeptide occupies glutamate 26–alanine 51. Leucine 65 carries the leucine amide modification.

Expressed by the venom gland.

The protein resides in the secreted. It is found in the target cell membrane. In terms of biological role, antimicrobial peptide with strong activity against the fungi B.cinerea (MIC=5 uM) and C.albicans (MIC=33 uM), and no activity against the Gram-negative bacterium E.coli (MIC&gt;200 uM) and the Gram-positive bacterium S.aureus (MIC&gt;200 uM). Shows cytolytic activity against insect cell lines. Has no hemolytic activity against human erythrocytes. In vivo, peptide injection in the vicinity of the head and thorax of lepidopteran larvae induces feeding disorder that lasts one or two days before recovering. In Orancistrocerus drewseni (Solitary wasp), this protein is Venom peptide 3.